Consider the following 148-residue polypeptide: Lysozyme C-3 (148 aa).

The N-terminal stretch at 1–18 is a signal peptide; it reads MKTLLVLALLLLSVSVQA. Positions 19-148 constitute a C-type lysozyme domain; that stretch reads KVYDRCEFAR…VSQYIRGCKL (130 aa). Disulfide bonds link C24-C146, C48-C134, C83-C99, and C95-C113. Catalysis depends on residues E53 and D71.

Belongs to the glycosyl hydrolase 22 family. In terms of assembly, monomer.

The protein resides in the secreted. The enzyme catalyses Hydrolysis of (1-&gt;4)-beta-linkages between N-acetylmuramic acid and N-acetyl-D-glucosamine residues in a peptidoglycan and between N-acetyl-D-glucosamine residues in chitodextrins.. Functionally, lysozymes have primarily a bacteriolytic function; those in tissues and body fluids are associated with the monocyte-macrophage system and enhance the activity of immunoagents. This Sus scrofa (Pig) protein is Lysozyme C-3.